The primary structure comprises 444 residues: Ribosomal protein uS12 methylthiotransferase RimO (444 aa).

Positions 3-119 constitute an MTTase N-terminal domain; it reads IKIGLVSLGC…IARAVRRVLE (117 aa). [4Fe-4S] cluster is bound by residues Cys-12, Cys-48, Cys-82, Cys-156, Cys-160, and Cys-163. The Radical SAM core domain maps to 142-372; sequence ATPPYTAYLK…MMLQQEISLQ (231 aa). The TRAM domain maps to 375–444; that stretch reads LKRVGEVIEV…EYDLTGETVL (70 aa).

Belongs to the methylthiotransferase family. RimO subfamily. The cofactor is [4Fe-4S] cluster.

The protein resides in the cytoplasm. It carries out the reaction L-aspartate(89)-[ribosomal protein uS12]-hydrogen + (sulfur carrier)-SH + AH2 + 2 S-adenosyl-L-methionine = 3-methylsulfanyl-L-aspartate(89)-[ribosomal protein uS12]-hydrogen + (sulfur carrier)-H + 5'-deoxyadenosine + L-methionine + A + S-adenosyl-L-homocysteine + 2 H(+). Functionally, catalyzes the methylthiolation of an aspartic acid residue of ribosomal protein uS12. The polypeptide is Ribosomal protein uS12 methylthiotransferase RimO (Pelotomaculum thermopropionicum (strain DSM 13744 / JCM 10971 / SI)).